Here is a 77-residue protein sequence, read N- to C-terminus: Small ribosomal subunit protein bS18 (77 aa).

The protein belongs to the bacterial ribosomal protein bS18 family. In terms of assembly, part of the 30S ribosomal subunit. Forms a tight heterodimer with protein bS6.

Functionally, binds as a heterodimer with protein bS6 to the central domain of the 16S rRNA, where it helps stabilize the platform of the 30S subunit. The sequence is that of Small ribosomal subunit protein bS18 from Shouchella clausii (strain KSM-K16) (Alkalihalobacillus clausii).